We begin with the raw amino-acid sequence, 117 residues long: Large ribosomal subunit protein bL20 (117 aa).

The protein belongs to the bacterial ribosomal protein bL20 family.

Its function is as follows. Binds directly to 23S ribosomal RNA and is necessary for the in vitro assembly process of the 50S ribosomal subunit. It is not involved in the protein synthesizing functions of that subunit. The polypeptide is Large ribosomal subunit protein bL20 (Carboxydothermus hydrogenoformans (strain ATCC BAA-161 / DSM 6008 / Z-2901)).